A 412-amino-acid chain; its full sequence is [Pyruvate dehydrogenase (acetyl-transferring)] kinase isozyme 4, mitochondrial (412 aa).

The Histidine kinase domain occupies 138-368 (ILEYKDNCTV…DAIIYLKALS (231 aa)). ATP contacts are provided by residues 254–261 (ELFKNAMR), Asp293, 312–313 (ST), and 329–334 (GFGYGL).

It belongs to the PDK/BCKDK protein kinase family. As to quaternary structure, homodimer. Interacts with the pyruvate dehydrogenase complex subunit DLAT, and is part of the multimeric pyruvate dehydrogenase complex that contains multiple copies of pyruvate dehydrogenase (E1), dihydrolipoamide acetyltransferase (DLAT, E2) and lipoamide dehydrogenase (DLD, E3). Ubiquitous; highest levels of expression in heart and skeletal muscle.

Its subcellular location is the mitochondrion matrix. The enzyme catalyses L-seryl-[pyruvate dehydrogenase E1 alpha subunit] + ATP = O-phospho-L-seryl-[pyruvate dehydrogenase E1 alpha subunit] + ADP + H(+). Kinase that plays a key role in regulation of glucose and fatty acid metabolism and homeostasis via phosphorylation of the pyruvate dehydrogenase subunits PDHA1 and PDHA2. This inhibits pyruvate dehydrogenase activity, and thereby regulates metabolite flux through the tricarboxylic acid cycle, down-regulates aerobic respiration and inhibits the formation of acetyl-coenzyme A from pyruvate. Inhibition of pyruvate dehydrogenase decreases glucose utilization and increases fat metabolism in response to prolonged fasting and starvation. Plays an important role in maintaining normal blood glucose levels under starvation, and is involved in the insulin signaling cascade. Via its regulation of pyruvate dehydrogenase activity, plays an important role in maintaining normal blood pH and in preventing the accumulation of ketone bodies under starvation. In the fed state, mediates cellular responses to glucose levels and to a high-fat diet. Regulates both fatty acid oxidation and de novo fatty acid biosynthesis. Plays a role in the generation of reactive oxygen species. Protects detached epithelial cells against anoikis. Plays a role in cell proliferation via its role in regulating carbohydrate and fatty acid metabolism. This chain is [Pyruvate dehydrogenase (acetyl-transferring)] kinase isozyme 4, mitochondrial (Pdk4), found in Rattus norvegicus (Rat).